Consider the following 316-residue polypeptide: tRNA dimethylallyltransferase (316 aa).

19–26 (GPTASGKT) is an ATP binding site. Residue 21-26 (TASGKT) coordinates substrate. Interaction with substrate tRNA regions lie at residues 44–47 (DSAL), 168–172 (QRITR), and 249–254 (RCVGYR).

Belongs to the IPP transferase family. As to quaternary structure, monomer. Requires Mg(2+) as cofactor.

The enzyme catalyses adenosine(37) in tRNA + dimethylallyl diphosphate = N(6)-dimethylallyladenosine(37) in tRNA + diphosphate. Catalyzes the transfer of a dimethylallyl group onto the adenine at position 37 in tRNAs that read codons beginning with uridine, leading to the formation of N6-(dimethylallyl)adenosine (i(6)A). This Colwellia psychrerythraea (strain 34H / ATCC BAA-681) (Vibrio psychroerythus) protein is tRNA dimethylallyltransferase.